A 210-amino-acid polypeptide reads, in one-letter code: Noranthrone monooxygenase (210 aa).

A run of 4 helical transmembrane segments spans residues 59–79 (TGSF…PILI), 105–125 (GIAL…YSVG), 131–151 (WMVA…FMNA), and 188–208 (VRAL…CGVV).

This sequence belongs to the anthrone oxygenase family.

The protein localises to the membrane. The enzyme catalyses noranthrone + O2 = norsolorinic acid + H2O. The protein operates within mycotoxin biosynthesis; aflatoxin biosynthesis. Functionally, monooxygenase that converts norsolorinic acid anthrone to norsolorinic acid during aflatoxin biosynthesis. This chain is Noranthrone monooxygenase (hypC), found in Aspergillus flavus (strain ATCC 200026 / FGSC A1120 / IAM 13836 / NRRL 3357 / JCM 12722 / SRRC 167).